Here is a 479-residue protein sequence, read N- to C-terminus: Adenosylhomocysteinase (479 aa).

Residues Thr-65, Asp-145, and Glu-205 each contribute to the substrate site. 206–208 is a binding site for NAD(+); the sequence is TTT. Substrate contacts are provided by Lys-235 and Asp-239. Residues Asn-240, 269–274, Glu-292, Asn-327, 348–350, and Asn-393 contribute to the NAD(+) site; these read GYGDVG and IGH.

It belongs to the adenosylhomocysteinase family. Requires NAD(+) as cofactor.

The protein localises to the cytoplasm. It catalyses the reaction S-adenosyl-L-homocysteine + H2O = L-homocysteine + adenosine. It participates in amino-acid biosynthesis; L-homocysteine biosynthesis; L-homocysteine from S-adenosyl-L-homocysteine: step 1/1. May play a key role in the regulation of the intracellular concentration of adenosylhomocysteine. The sequence is that of Adenosylhomocysteinase from Herminiimonas arsenicoxydans.